Reading from the N-terminus, the 522-residue chain is Ribonuclease Y (522 aa).

Residues 2 to 22 traverse the membrane as a helical segment; sequence WVEILVGSSAAIISGAAGYLL. Positions 212-278 constitute a KH domain; the sequence is LINTVSIPSE…TKVIELLVED (67 aa). The HD domain occupies 338–431; it reads ALGHSLEVAH…VCAADTLSAA (94 aa).

This sequence belongs to the RNase Y family.

The protein localises to the cell membrane. Endoribonuclease that initiates mRNA decay. This chain is Ribonuclease Y, found in Nitratiruptor sp. (strain SB155-2).